The following is a 381-amino-acid chain: Succinyl-diaminopimelate desuccinylase (381 aa).

His-70 provides a ligand contact to Zn(2+). Asp-72 is an active-site residue. Asp-103 lines the Zn(2+) pocket. The active-site Proton acceptor is Glu-136. Residues Glu-137, Glu-165, and His-354 each contribute to the Zn(2+) site.

Belongs to the peptidase M20A family. DapE subfamily. In terms of assembly, homodimer. Zn(2+) is required as a cofactor. It depends on Co(2+) as a cofactor.

The enzyme catalyses N-succinyl-(2S,6S)-2,6-diaminopimelate + H2O = (2S,6S)-2,6-diaminopimelate + succinate. It participates in amino-acid biosynthesis; L-lysine biosynthesis via DAP pathway; LL-2,6-diaminopimelate from (S)-tetrahydrodipicolinate (succinylase route): step 3/3. Functionally, catalyzes the hydrolysis of N-succinyl-L,L-diaminopimelic acid (SDAP), forming succinate and LL-2,6-diaminopimelate (DAP), an intermediate involved in the bacterial biosynthesis of lysine and meso-diaminopimelic acid, an essential component of bacterial cell walls. This Roseobacter denitrificans (strain ATCC 33942 / OCh 114) (Erythrobacter sp. (strain OCh 114)) protein is Succinyl-diaminopimelate desuccinylase.